Here is a 365-residue protein sequence, read N- to C-terminus: NADH-quinone oxidoreductase subunit D (365 aa).

It belongs to the complex I 49 kDa subunit family. As to quaternary structure, NDH-1 is composed of 14 different subunits. Subunits NuoB, C, D, E, F, and G constitute the peripheral sector of the complex.

It localises to the cell membrane. It catalyses the reaction a quinone + NADH + 5 H(+)(in) = a quinol + NAD(+) + 4 H(+)(out). Functionally, NDH-1 shuttles electrons from NADH, via FMN and iron-sulfur (Fe-S) centers, to quinones in the respiratory chain. The immediate electron acceptor for the enzyme in this species is believed to be a menaquinone. Couples the redox reaction to proton translocation (for every two electrons transferred, four hydrogen ions are translocated across the cytoplasmic membrane), and thus conserves the redox energy in a proton gradient. The polypeptide is NADH-quinone oxidoreductase subunit D (Carboxydothermus hydrogenoformans (strain ATCC BAA-161 / DSM 6008 / Z-2901)).